The chain runs to 663 residues: Epithelial sodium channel subunit gamma-2 (663 aa).

The Cytoplasmic portion of the chain corresponds to Met-1–Trp-55. A helical membrane pass occupies residues Ile-56–Leu-76. Residues Met-77–Cys-544 are Extracellular-facing. 8 cysteine pairs are disulfide-bonded: Cys-101–Cys-286, Cys-209–Cys-217, Cys-263–Cys-270, Cys-375–Cys-460, Cys-397–Cys-456, Cys-401–Cys-452, Cys-410–Cys-437, and Cys-412–Cys-426. A helical transmembrane segment spans residues Ser-545–Leu-565. Over Arg-566–Phe-663 the chain is Cytoplasmic.

The protein belongs to the amiloride-sensitive sodium channel (TC 1.A.6) family. SCNN1G subfamily. As to quaternary structure, component of the heterotrimeric epithelial sodium channel (ENaC) composed of an alpha/SCNN1A, a beta/SCNN1B and a gamma/SCNN1G subunit.

It is found in the apical cell membrane. It carries out the reaction Na(+)(in) = Na(+)(out). Originally identified and characterized by its inhibition by the diuretic drug amiloride. Its function is as follows. This is one of the three pore-forming subunits of the heterotrimeric epithelial sodium channel (ENaC), a critical regulator of sodium balance and fluid homeostasis. ENaC operates in epithelial tissues, where it mediates the electrodiffusion of sodium ions from extracellular fluid through the apical membrane of cells, with water following osmotically. The protein is Epithelial sodium channel subunit gamma-2 (scnn1g-b) of Xenopus laevis (African clawed frog).